Consider the following 892-residue polypeptide: Putative VWFA domain-containing protein ORF892 (892 aa).

The tract at residues 109 to 548 (EEQLQRRPQR…RGYAHGDEDL (440 aa)) is disordered. Over residues 129–142 (SEVANQRVSRSAEN) the composition is skewed to polar residues. Basic and acidic residues predominate over residues 143–162 (QGKRGNEEKQQQKTPGKTEE). The span at 169–184 (ESGEEGNQQEESGEEQ) shows a compositional bias: acidic residues. Residues 185–196 (EGVKGSRSKQRE) show a composition bias toward basic and acidic residues. Residues 212–223 (ESGESESEEGQS) show a composition bias toward acidic residues. Composition is skewed to low complexity over residues 224-238 (SEETQLSSSGEGNQQ) and 271-283 (GNGQESSGEAQNG). Residues 287-300 (GESEGEITESESAS) show a composition bias toward acidic residues. Residues 301–323 (EEQTGSKGKSGQQGEEGQQQSGS) show a composition bias toward low complexity. Acidic residues-rich tracts occupy residues 324–336 (EGEEGAEQEESGE) and 425–448 (SESEEGQSPEETQEGGEGGAETEE). Low complexity predominate over residues 453–466 (SEAEGTAAEGEVGQ). 2 stretches are compositionally biased toward polar residues: residues 467–481 (PSEQGVSSSTGSGQR) and 512–531 (QTGSSSESAGSEQLGSQQGE). The segment covering 536-546 (EGGRGYAHGDE) has biased composition (basic and acidic residues). Positions 553 to 620 (QEINSILQTL…VQKLLKDLNV (68 aa)) form a coiled coil. Positions 723–892 (DFLFVIDSSG…GNIVLKRLVH (170 aa)) constitute a VWFA domain.

This chain is Putative VWFA domain-containing protein ORF892, found in Acidianus two-tailed virus (ATV).